Reading from the N-terminus, the 198-residue chain is Endonuclease V (198 aa).

Mg(2+) contacts are provided by aspartate 38 and aspartate 101.

It belongs to the endonuclease V family. Mg(2+) is required as a cofactor.

Its subcellular location is the cytoplasm. The catalysed reaction is Endonucleolytic cleavage at apurinic or apyrimidinic sites to products with a 5'-phosphate.. In terms of biological role, DNA repair enzyme involved in the repair of deaminated bases. Selectively cleaves double-stranded DNA at the second phosphodiester bond 3' to a deoxyinosine leaving behind the intact lesion on the nicked DNA. This Saccharolobus islandicus (strain M.16.4 / Kamchatka #3) (Sulfolobus islandicus) protein is Endonuclease V.